The sequence spans 175 residues: MSNLYYTVFDTDVCTVLLVLTLNGFVCYASLGKPAIELKGIMAKDFSSLPYQLKPLSTMTGDKIEIDKSVEKFKLLVETPSVSQDIKTELLFGTPLQRKVWKELVKIPAGQTRTYKELADLLGTHSRVIGNCCGANRIAVLIPCHRVVGANNKLTGYRWGKSYKEYLLKQEGIGI.

DNA is bound by residues Y115 and R127. C144 (nucleophile; methyl group acceptor) is an active-site residue.

Belongs to the MGMT family.

Its subcellular location is the nucleus. It carries out the reaction a 6-O-methyl-2'-deoxyguanosine in DNA + L-cysteinyl-[protein] = S-methyl-L-cysteinyl-[protein] + a 2'-deoxyguanosine in DNA. The enzyme catalyses a 4-O-methyl-thymidine in DNA + L-cysteinyl-[protein] = a thymidine in DNA + S-methyl-L-cysteinyl-[protein]. Its function is as follows. Involved in the cellular defense against the biological effects of O6-methylguanine (O6-MeG) and O4-methylthymine (O4-MeT) in DNA. Repairs the methylated nucleobase in DNA by stoichiometrically transferring the methyl group to a cysteine residue in the enzyme. This is a suicide reaction: the enzyme is irreversibly inactivated. The chain is Methylated-DNA--protein-cysteine methyltransferase (MGT1) from Candida albicans (strain SC5314 / ATCC MYA-2876) (Yeast).